Here is a 110-residue protein sequence, read N- to C-terminus: Senescence associated gene 20 (110 aa).

In Arabidopsis thaliana (Mouse-ear cress), this protein is Senescence associated gene 20.